Reading from the N-terminus, the 102-residue chain is UPF0213 protein XCC3072 (102 aa).

Positions 5 to 80 (KPWHLYLLLC…KQQPRARKLA (76 aa)) constitute a GIY-YIG domain.

This sequence belongs to the UPF0213 family.

The chain is UPF0213 protein XCC3072 from Xanthomonas campestris pv. campestris (strain ATCC 33913 / DSM 3586 / NCPPB 528 / LMG 568 / P 25).